Consider the following 480-residue polypeptide: Cysteine--tRNA ligase (480 aa).

Zn(2+) is bound at residue C29. A 'HIGH' region motif is present at residues 31–41 (ITVYDYCHLGH). The Zn(2+) site is built by C215, H240, and E244. Residues 272–276 (KMSKS) carry the 'KMSKS' region motif. K275 provides a ligand contact to ATP.

Belongs to the class-I aminoacyl-tRNA synthetase family. Monomer. Zn(2+) serves as cofactor.

Its subcellular location is the cytoplasm. It carries out the reaction tRNA(Cys) + L-cysteine + ATP = L-cysteinyl-tRNA(Cys) + AMP + diphosphate. This is Cysteine--tRNA ligase from Microcystis aeruginosa (strain NIES-843 / IAM M-2473).